The primary structure comprises 853 residues: DNA topoisomerase 1 (853 aa).

The Toprim domain occupies 3-136; it reads KSLVIVESPV…KFRRVVFNEI (134 aa). Residues glutamate 9 and aspartate 105 each coordinate Mg(2+). Residues 152–565 enclose the Topo IA-type catalytic domain; the sequence is NMNRVYSQQA…SFFDNFSQQL (414 aa). Residues 186–191 form an interaction with DNA region; the sequence is SAGRVQ. The active-site O-(5'-phospho-DNA)-tyrosine intermediate is the tyrosine 313. 3 consecutive C4-type zinc fingers follow at residues 589-621, 649-676, and 699-724; these read CSLC…EKRC, CKKC…NPSC, and CEKC…NDTC.

Belongs to the type IA topoisomerase family. Monomer. It depends on Mg(2+) as a cofactor.

It carries out the reaction ATP-independent breakage of single-stranded DNA, followed by passage and rejoining.. In terms of biological role, releases the supercoiling and torsional tension of DNA, which is introduced during the DNA replication and transcription, by transiently cleaving and rejoining one strand of the DNA duplex. Introduces a single-strand break via transesterification at a target site in duplex DNA. The scissile phosphodiester is attacked by the catalytic tyrosine of the enzyme, resulting in the formation of a DNA-(5'-phosphotyrosyl)-enzyme intermediate and the expulsion of a 3'-OH DNA strand. The free DNA strand then undergoes passage around the unbroken strand, thus removing DNA supercoils. Finally, in the religation step, the DNA 3'-OH attacks the covalent intermediate to expel the active-site tyrosine and restore the DNA phosphodiester backbone. This Buchnera aphidicola subsp. Schizaphis graminum (strain Sg) protein is DNA topoisomerase 1.